We begin with the raw amino-acid sequence, 190 residues long: Adenine phosphoribosyltransferase (190 aa).

It belongs to the purine/pyrimidine phosphoribosyltransferase family. As to quaternary structure, homodimer.

The protein resides in the cytoplasm. The catalysed reaction is AMP + diphosphate = 5-phospho-alpha-D-ribose 1-diphosphate + adenine. Its pathway is purine metabolism; AMP biosynthesis via salvage pathway; AMP from adenine: step 1/1. Its function is as follows. Catalyzes a salvage reaction resulting in the formation of AMP, that is energically less costly than de novo synthesis. The polypeptide is Adenine phosphoribosyltransferase (Cupriavidus taiwanensis (strain DSM 17343 / BCRC 17206 / CCUG 44338 / CIP 107171 / LMG 19424 / R1) (Ralstonia taiwanensis (strain LMG 19424))).